Reading from the N-terminus, the 156-residue chain is Small ribosomal subunit protein uS7 (156 aa).

This sequence belongs to the universal ribosomal protein uS7 family. In terms of assembly, part of the 30S ribosomal subunit. Contacts proteins S9 and S11.

Its function is as follows. One of the primary rRNA binding proteins, it binds directly to 16S rRNA where it nucleates assembly of the head domain of the 30S subunit. Is located at the subunit interface close to the decoding center, probably blocks exit of the E-site tRNA. The chain is Small ribosomal subunit protein uS7 from Cupriavidus necator (strain ATCC 17699 / DSM 428 / KCTC 22496 / NCIMB 10442 / H16 / Stanier 337) (Ralstonia eutropha).